A 552-amino-acid polypeptide reads, in one-letter code: Phosphoglucomutase (552 aa).

The active-site Phosphoserine intermediate is S143. Positions 143, 295, 297, and 299 each coordinate Mg(2+).

This sequence belongs to the phosphohexose mutase family. Requires Mg(2+) as cofactor.

The catalysed reaction is alpha-D-glucose 1-phosphate = alpha-D-glucose 6-phosphate. It functions in the pathway glycolipid metabolism; diglucosyl-diacylglycerol biosynthesis. Its function is as follows. Catalyzes the interconversion between glucose-6-phosphate and alpha-glucose-1-phosphate. This is the first step in the biosynthesis of diglucosyl-diacylglycerol (Glc2-DAG), i.e. the predominant glycolipid found in the S.aureus membrane, which is also used as a membrane anchor for lipoteichoic acid (LTA). This is Phosphoglucomutase (pgcA) from Staphylococcus aureus (strain bovine RF122 / ET3-1).